We begin with the raw amino-acid sequence, 351 residues long: Tetraacyldisaccharide 4'-kinase (351 aa).

ATP is bound at residue 47–54; sequence KAGGTGKT.

The protein belongs to the LpxK family.

It catalyses the reaction a lipid A disaccharide + ATP = a lipid IVA + ADP + H(+). It participates in glycolipid biosynthesis; lipid IV(A) biosynthesis; lipid IV(A) from (3R)-3-hydroxytetradecanoyl-[acyl-carrier-protein] and UDP-N-acetyl-alpha-D-glucosamine: step 6/6. Its function is as follows. Transfers the gamma-phosphate of ATP to the 4'-position of a tetraacyldisaccharide 1-phosphate intermediate (termed DS-1-P) to form tetraacyldisaccharide 1,4'-bis-phosphate (lipid IVA). The protein is Tetraacyldisaccharide 4'-kinase of Cytophaga hutchinsonii (strain ATCC 33406 / DSM 1761 / CIP 103989 / NBRC 15051 / NCIMB 9469 / D465).